The primary structure comprises 185 residues: Ribosome-recycling factor (185 aa).

It belongs to the RRF family.

Its subcellular location is the cytoplasm. Functionally, responsible for the release of ribosomes from messenger RNA at the termination of protein biosynthesis. May increase the efficiency of translation by recycling ribosomes from one round of translation to another. The chain is Ribosome-recycling factor from Bacillus pumilus (strain SAFR-032).